We begin with the raw amino-acid sequence, 495 residues long: 3-octaprenyl-4-hydroxybenzoate carboxy-lyase (495 aa).

N172 contacts Mn(2+). Prenylated FMN-binding positions include 175–177, 189–191, and 194–195; these read IYR, RWL, and RG. E238 contributes to the Mn(2+) binding site. D287 acts as the Proton donor in catalysis.

It belongs to the UbiD family. In terms of assembly, homohexamer. It depends on prenylated FMN as a cofactor. Mn(2+) serves as cofactor.

The protein localises to the cell membrane. It catalyses the reaction a 4-hydroxy-3-(all-trans-polyprenyl)benzoate + H(+) = a 2-(all-trans-polyprenyl)phenol + CO2. Its pathway is cofactor biosynthesis; ubiquinone biosynthesis. Catalyzes the decarboxylation of 3-octaprenyl-4-hydroxy benzoate to 2-octaprenylphenol, an intermediate step in ubiquinone biosynthesis. This Yersinia pseudotuberculosis serotype O:1b (strain IP 31758) protein is 3-octaprenyl-4-hydroxybenzoate carboxy-lyase.